The sequence spans 468 residues: UDP-N-acetylmuramate--L-alanine ligase (468 aa).

Residue glycine 112–threonine 118 participates in ATP binding.

Belongs to the MurCDEF family.

Its subcellular location is the cytoplasm. It catalyses the reaction UDP-N-acetyl-alpha-D-muramate + L-alanine + ATP = UDP-N-acetyl-alpha-D-muramoyl-L-alanine + ADP + phosphate + H(+). It participates in cell wall biogenesis; peptidoglycan biosynthesis. Cell wall formation. The chain is UDP-N-acetylmuramate--L-alanine ligase from Bordetella avium (strain 197N).